Here is a 340-residue protein sequence, read N- to C-terminus: S-adenosylmethionine:tRNA ribosyltransferase-isomerase (340 aa).

This sequence belongs to the QueA family. Monomer.

The protein localises to the cytoplasm. The enzyme catalyses 7-aminomethyl-7-carbaguanosine(34) in tRNA + S-adenosyl-L-methionine = epoxyqueuosine(34) in tRNA + adenine + L-methionine + 2 H(+). Its pathway is tRNA modification; tRNA-queuosine biosynthesis. Its function is as follows. Transfers and isomerizes the ribose moiety from AdoMet to the 7-aminomethyl group of 7-deazaguanine (preQ1-tRNA) to give epoxyqueuosine (oQ-tRNA). This is S-adenosylmethionine:tRNA ribosyltransferase-isomerase from Campylobacter concisus (strain 13826).